A 479-amino-acid polypeptide reads, in one-letter code: Cardiolipin synthase A (479 aa).

2 helical membrane passes run 8–28 (FFGYVLGFIHLLGTGAAIHAL) and 38–58 (IAWAMPLLFIPYFTLLPYLVF). 2 PLD phosphodiesterase domains span residues 218–245 (INFRNHRKIVVVDGLKGYIGGHNVGDEY) and 392–419 (EPGFLHQKVVLVDNEITAIGSANLDNRS). Active-site residues include His-223, Lys-225, Asp-230, His-397, Lys-399, and Asp-404.

This sequence belongs to the phospholipase D family. Cardiolipin synthase subfamily. ClsA sub-subfamily.

The protein resides in the cell inner membrane. The catalysed reaction is 2 a 1,2-diacyl-sn-glycero-3-phospho-(1'-sn-glycerol) = a cardiolipin + glycerol. Its function is as follows. Catalyzes the reversible phosphatidyl group transfer from one phosphatidylglycerol molecule to another to form cardiolipin (CL) (diphosphatidylglycerol) and glycerol. The protein is Cardiolipin synthase A of Pseudomonas syringae pv. syringae (strain B728a).